Consider the following 127-residue polypeptide: uncharacterized protein (127 aa).

A helical membrane pass occupies residues 84–103 (IALLSLFISLSIRITCFPFF).

The protein resides in the membrane. This is an uncharacterized protein from Saccharomyces cerevisiae (strain ATCC 204508 / S288c) (Baker's yeast).